The primary structure comprises 404 residues: Cytochrome b561 and DOMON domain-containing protein At5g35735 (404 aa).

Positions 1-25 (MDRTQSPKTALFAVLATLLVLTVNG) are cleaved as a signal peptide. A DOMON domain is found at 49 to 164 (LGSFLHWTYN…ITANQLWQVG (116 aa)). The region spanning 170-369 (VPASHQTSGD…LEPLTWFIVL (200 aa)) is the Cytochrome b561 domain. Positions 172 to 207 (ASHQTSGDNMRSSGRIDFRTGQASAGGGGSGDRLRK) are disordered. Polar residues predominate over residues 173 to 183 (SHQTSGDNMRS). Helical transmembrane passes span 210–230 (THGV…AMMA) and 241–261 (WFYL…AGWA). 3 residues coordinate heme b: histidine 211, histidine 245, and histidine 278. Residues 280 to 300 (NLGIALFTFATLQVFALLVRP) form a helical membrane-spanning segment. Residue histidine 314 coordinates heme b. Helical transmembrane passes span 316–336 (TVGY…FDIL) and 349–369 (ILIF…FIVL). A disordered region spans residues 376–404 (GNTVAAPTSSKYSNGVNGTTTTGPHHQDA). The segment covering 380–404 (AAPTSSKYSNGVNGTTTTGPHHQDA) has biased composition (polar residues).

Requires heme b as cofactor.

It localises to the membrane. May act as a catecholamine-responsive trans-membrane electron transporter. This is Cytochrome b561 and DOMON domain-containing protein At5g35735 from Arabidopsis thaliana (Mouse-ear cress).